Consider the following 435-residue polypeptide: ATP-dependent RNA helicase SUB2 (435 aa).

The segment at 1–40 (MSHEGQEELLDYSDSEEIAVPTTTAPSAAAGEGANDKEAD) is disordered. Positions 7–17 (EELLDYSDSEE) are enriched in acidic residues. Residues 19–33 (AVPTTTAPSAAAGEG) show a composition bias toward low complexity. The Q motif signature appears at 51-79 (TGFRDFLLKPELLRAIGDCGFEHPSEVQQ). In terms of domain architecture, Helicase ATP-binding spans 82–257 (IPQSILGTDV…KKFMQNPLEI (176 aa)). An ATP-binding site is contributed by 95–102 (AKSGLGKT). The short motif at 204–207 (DECD) is the DECD box element. The region spanning 269–430 (GLQQYYIKLD…EFPEEGVDPS (162 aa)) is the Helicase C-terminal domain.

Belongs to the DEAD box helicase family. DECD subfamily.

Its subcellular location is the nucleus. It catalyses the reaction ATP + H2O = ADP + phosphate + H(+). Functionally, ATP-binding RNA helicase involved in transcription elongation and required for the export of mRNA out of the nucleus. SUB2 also plays a role in pre-mRNA splicing and spliceosome assembly. May be involved in rDNA and telomeric silencing, and maintenance of genome integrity. This is ATP-dependent RNA helicase SUB2 (SUB2) from Debaryomyces hansenii (strain ATCC 36239 / CBS 767 / BCRC 21394 / JCM 1990 / NBRC 0083 / IGC 2968) (Yeast).